Reading from the N-terminus, the 451-residue chain is uncharacterized protein (451 aa).

Positions 2 to 60 (VVKVKQKIPLKIKRMGINGEGIGFYQKTLVFVPGALKGEDIFCQITAVKRNFAEAKLLT) constitute a TRAM domain. Residues Cys73, Cys79, Cys82, and Cys162 each contribute to the [4Fe-4S] cluster site. Residues Gln283, Tyr312, Asp333, and Asp381 each contribute to the S-adenosyl-L-methionine site. Cys408 serves as the catalytic Nucleophile.

It belongs to the class I-like SAM-binding methyltransferase superfamily. RNA M5U methyltransferase family.

This is an uncharacterized protein from Streptococcus pyogenes serotype M1.